The following is an 895-amino-acid chain: Catenin alpha-3 (895 aa).

Positions 74–107 form a coiled coil; it reads EMIAKEATVLKEELAAALQEVRKESKALKVSAER. Ser-160 bears the Phosphoserine mark. Residues 325 to 379 are a coiled coil; that stretch reads RERIIAECNAIRQALQDLLTEYMSNTGKTERSNTLNTAIVNMSKKTRDLRRQLRK. Position 361 is a phosphothreonine (Thr-361). A disordered region spans residues 635–660; sequence DVSDLEDDHEVRSHTSIQTEGKTDRA. 2 positions are modified to phosphoserine: Ser-637 and Ser-647. Thr-649 bears the Phosphothreonine mark.

Belongs to the vinculin/alpha-catenin family. Interacts with CTNNB1. Interacts with PKP2. As to expression, expressed in heart (at protein level).

The protein localises to the cytoplasm. The protein resides in the cytoskeleton. Its subcellular location is the cell junction. It localises to the desmosome. In terms of biological role, may be involved in formation of stretch-resistant cell-cell adhesion complexes. The chain is Catenin alpha-3 from Mus musculus (Mouse).